Reading from the N-terminus, the 943-residue chain is Isoleucine--tRNA ligase (943 aa).

The 'HIGH' region motif lies at Pro58 to His68. L-isoleucyl-5'-AMP is bound at residue Glu567. Residues Lys608–Ser612 carry the 'KMSKS' region motif. Lys611 lines the ATP pocket. Cys906, Cys909, Cys926, and Cys929 together coordinate Zn(2+).

Belongs to the class-I aminoacyl-tRNA synthetase family. IleS type 1 subfamily. In terms of assembly, monomer. It depends on Zn(2+) as a cofactor.

It localises to the cytoplasm. The enzyme catalyses tRNA(Ile) + L-isoleucine + ATP = L-isoleucyl-tRNA(Ile) + AMP + diphosphate. Catalyzes the attachment of isoleucine to tRNA(Ile). As IleRS can inadvertently accommodate and process structurally similar amino acids such as valine, to avoid such errors it has two additional distinct tRNA(Ile)-dependent editing activities. One activity is designated as 'pretransfer' editing and involves the hydrolysis of activated Val-AMP. The other activity is designated 'posttransfer' editing and involves deacylation of mischarged Val-tRNA(Ile). This is Isoleucine--tRNA ligase from Pseudomonas fluorescens (strain Pf0-1).